The sequence spans 300 residues: Transcription initiation factor IIB (300 aa).

The TFIIB-type zinc-finger motif lies at 2–34 (TKQKVCPVCGSTEFIYDPERGEIVCARCGYVIE). C7, C10, C26, and C29 together coordinate Zn(2+). Repeat copies occupy residues 114–197 (SELD…ARNL) and 210–291 (DYVN…ELVE).

The protein belongs to the TFIIB family.

Its function is as follows. Stabilizes TBP binding to an archaeal box-A promoter. Also responsible for recruiting RNA polymerase II to the pre-initiation complex (DNA-TBP-TFIIB). In Pyrococcus horikoshii (strain ATCC 700860 / DSM 12428 / JCM 9974 / NBRC 100139 / OT-3), this protein is Transcription initiation factor IIB.